The primary structure comprises 295 residues: uncharacterized protein (295 aa).

Residues 1–19 (MFRKFLFIPLLIVTSLVKA) form the signal peptide. Residues 274 to 295 (KRNNPPLKNNNAKSKNSYETHK) are disordered. Positions 276–288 (NNPPLKNNNAKSK) are enriched in low complexity.

This is an uncharacterized protein from Rickettsia typhi (strain ATCC VR-144 / Wilmington).